The sequence spans 627 residues: Neutral endopeptidase (627 aa).

A Peptidase M13 domain is found at Met1–Trp627. A Zn(2+)-binding site is contributed by His475. Glu476 is an active-site residue. Zn(2+) contacts are provided by His479 and Glu535. The active-site Proton donor is Asp539.

Belongs to the peptidase M13 family. As to quaternary structure, monomer. It depends on Zn(2+) as a cofactor.

The protein resides in the cytoplasm. Functionally, endopeptidase with broad substrate specificity for several oligopeptides. This is Neutral endopeptidase (pepO) from Lactococcus lactis subsp. cremoris (Streptococcus cremoris).